We begin with the raw amino-acid sequence, 262 residues long: MMIQLECLSVTYPGGVQALQAVSLNFNPGEFTVILGASGSGKSTLLRCLNGLIQPTAGTITIEGYRQINDPKVLHQHRQRTGMIFQQHQLIARQTALQNVLTGRLAYHSTVRSFFPLPKADKYIALECLDRVGLLSKALARVDNLSGGQQQRVGIARALAQQPRLMLADEPVASLDPASSHKVISFLRQICQEDGIAAIMSLHQVDLAKAYADRIVGISQGRIVFDGSAADIEECELNRIYGNAENIHFDDIPSNQYPIASN.

An ABC transporter domain is found at Ile3 to Glu245. Position 36 to 43 (Gly36 to Ser43) interacts with ATP.

Belongs to the ABC transporter superfamily. Phosphonates importer (TC 3.A.1.9.1) family. In terms of assembly, the complex is composed of two ATP-binding proteins (PhnC), two transmembrane proteins (PhnE) and a solute-binding protein (PhnD).

The protein localises to the cell inner membrane. It carries out the reaction phosphonate(out) + ATP + H2O = phosphonate(in) + ADP + phosphate + H(+). Its function is as follows. Part of the ABC transporter complex PhnCDE involved in phosphonates import. Responsible for energy coupling to the transport system. This is Phosphonates import ATP-binding protein PhnC 3 from Nostoc sp. (strain PCC 7120 / SAG 25.82 / UTEX 2576).